We begin with the raw amino-acid sequence, 99 residues long: UPF0473 protein LEUM_0559 (99 aa).

The protein belongs to the UPF0473 family.

This chain is UPF0473 protein LEUM_0559, found in Leuconostoc mesenteroides subsp. mesenteroides (strain ATCC 8293 / DSM 20343 / BCRC 11652 / CCM 1803 / JCM 6124 / NCDO 523 / NBRC 100496 / NCIMB 8023 / NCTC 12954 / NRRL B-1118 / 37Y).